The following is a 466-amino-acid chain: MTAAVDTSNTLHFQCETGNYHTFCPISCVAWLYPKIEDSFFLVIGTKTCGYFLQNAMGVMIFAEPRYAMAELEEGDISAKLNDYEELKRLCLQIQRDRNPSVIVWIGTCTTEIIKMDLEGLAQKLEAEIGIPIVVARANGLDYAFTQGEDTVLASMAQRCPEQVQEEERETRGGLQALFYGLRSGKKKEEEGFHPHPPLVIFGSVPDPVVTQLTLELKKYGIRVSGWLPAKRYGELPAIEPGTHVVGVNPFLSRTATTLVRRKKAKLIPAPFPIGPDGTRAWIEAIARELGIPTPGLAEREAEVWRHPQVQEYLGLLRGKSVFFMGDNLLEVSLARFLVRCGMTVQEIGIPYLDKRYQAAELALLERTCEEMGVPKPTLVEKPDNYHQLQRIKALQPDLVITGMAHANPLEARGITTKWSVEFTFAPIHGFGNTQALLELVTRPLRRNAALKGLGWEQLVREEASV.

The [4Fe-4S] cluster site is built by Cys-24, Cys-49, and Cys-109.

It belongs to the BchN/ChlN family. Protochlorophyllide reductase is composed of three subunits; ChlL, ChlN and ChlB. Forms a heterotetramer of two ChlB and two ChlN subunits. Requires [4Fe-4S] cluster as cofactor.

The enzyme catalyses chlorophyllide a + oxidized 2[4Fe-4S]-[ferredoxin] + 2 ADP + 2 phosphate = protochlorophyllide a + reduced 2[4Fe-4S]-[ferredoxin] + 2 ATP + 2 H2O. The protein operates within porphyrin-containing compound metabolism; chlorophyll biosynthesis (light-independent). Functionally, component of the dark-operative protochlorophyllide reductase (DPOR) that uses Mg-ATP and reduced ferredoxin to reduce ring D of protochlorophyllide (Pchlide) to form chlorophyllide a (Chlide). This reaction is light-independent. The NB-protein (ChlN-ChlB) is the catalytic component of the complex. This is Light-independent protochlorophyllide reductase subunit N from Synechococcus sp. (strain JA-3-3Ab) (Cyanobacteria bacterium Yellowstone A-Prime).